The following is a 644-amino-acid chain: MNLCSSGATASTTSLSSTGQAERSGGVPGGGAEGGGGDGGSGNSGGGGKANDGSAEAPTLCFAGGSGTAGAITGSAELTNANSPANGAGGASGFTGSGQQPTGSNGHSHLHNENNANMPPETRPKMVTVKHPESNKPKPTTKKSKPIQADQDVIKALQRCRDEGIKRLDLSKSSITVIPSTVKECVHLTELYLYSNKIGQLPPEIGCLVSLRNLALNENSLTSLPESLQNCSQLKVLDLRHNKLAEIPPVIYRLRSLTTLYLRFNRITAVADDLRQLVNLTMLSLRENKIRELGSAIGALVNLTTLDVSHNHLEHLPEDIGNCVNLSALDLQHNELLDIPDSIGNLKSLVRLGMRYNRLNSVPATLKNCKSMDEFNVEGNGITQLPDGMLASLSGLTTITLSRNQFASYPTGGPAQFTNVYSINLEHNRIDKIPYGIFSRAKGLTKLNMKENMLTALPLDIGTWVNMVELNLATNALQKLPDDIMNLQNLEILILSNNMLKKIPNTIGNLRRLRILDLEENRIEVLPHEIGLLHELQRLILQTNQITMLPRSIGHLGNLTHLSVSENNLQFLPEEIGSLESLENLYINQNPGLEKLPFELALCQNLKYLNIDKCPLSTIPPEIQAGGPSLVLQWLKMHSPYRQM.

Residues 1 to 19 show a composition bias toward low complexity; it reads MNLCSSGATASTTSLSSTG. 2 disordered regions span residues 1–60 and 82–150; these read MNLC…APTL and NSPA…IQAD. 2 stretches are compositionally biased toward gly residues: residues 26–50 and 87–96; these read GVPGGGAEGGGGDGGSGNSGGGGKA and GAGGASGFTG. Residues 99–117 show a composition bias toward polar residues; the sequence is QQPTGSNGHSHLHNENNAN. LRR repeat units lie at residues 164–185, 187–208, 210–231, 233–254, 256–277, 279–300, 302–323, 325–346, 348–370, 371–392, 395–416, 419–440, 443–464, 466–487, 489–510, 512–533, 535–556, 558–579, 581–603, and 605–626; these read GIKRLDLSKSSITVIPSTVKEC, HLTELYLYSNKIGQLPPEIGCL, SLRNLALNENSLTSLPESLQNC, QLKVLDLRHNKLAEIPPVIYRL, SLTTLYLRFNRITAVADDLRQL, NLTMLSLRENKIRELGSAIGAL, NLTTLDVSHNHLEHLPEDIGNC, NLSALDLQHNELLDIPDSIGNL, SLVRLGMRYNRLNSVPATLKNCK, SMDEFNVEGNGITQLPDGMLAS, GLTTITLSRNQFASYPTGGPAQ, NVYSINLEHNRIDKIPYGIFSR, GLTKLNMKENMLTALPLDIGTW, NMVELNLATNALQKLPDDIMNL, NLEILILSNNMLKKIPNTIGNL, RLRILDLEENRIEVLPHEIGLL, ELQRLILQTNQITMLPRSIGHL, NLTHLSVSENNLQFLPEEIGSL, SLENLYINQNPGLEKLPFELALC, and NLKYLNIDKCPLSTIPPEIQAG.

Belongs to the SHOC2 family.

Functionally, acts as a Ras effector and participates in MAPK pathway activation. Probably acts as a regulatory subunit of protein phosphatase that specifically dephosphorylates Raf kinase and stimulate Raf activity at specialized signaling complexes upon Ras activation. The sequence is that of Leucine-rich repeat protein soc-2 homolog (Sur-8) from Drosophila erecta (Fruit fly).